Reading from the N-terminus, the 399-residue chain is Protochlorophyllide reductase, chloroplastic (399 aa).

A chloroplast-targeting transit peptide spans 1–64 (MALQTASMLP…RQKVGAVRAE (64 aa)).

This sequence belongs to the short-chain dehydrogenases/reductases (SDR) family. POR subfamily.

Its subcellular location is the plastid. The protein localises to the chloroplast. It carries out the reaction chlorophyllide a + NADP(+) = protochlorophyllide a + NADPH + H(+). It participates in porphyrin-containing compound metabolism; chlorophyll biosynthesis. In terms of biological role, phototransformation of protochlorophyllide (Pchlide) to chlorophyllide (Chlide). The protein is Protochlorophyllide reductase, chloroplastic (3PCR) of Pisum sativum (Garden pea).